The chain runs to 353 residues: Protein RecA (353 aa).

67-74 (GPESSGKT) is a binding site for ATP. A disordered region spans residues 330–353 (SNPNSTPDFSVDDSEGVAETNEDF). The segment covering 339–353 (SVDDSEGVAETNEDF) has biased composition (acidic residues).

The protein belongs to the RecA family.

It is found in the cytoplasm. Functionally, can catalyze the hydrolysis of ATP in the presence of single-stranded DNA, the ATP-dependent uptake of single-stranded DNA by duplex DNA, and the ATP-dependent hybridization of homologous single-stranded DNAs. It interacts with LexA causing its activation and leading to its autocatalytic cleavage. The polypeptide is Protein RecA (Shigella sonnei).